The sequence spans 481 residues: Glutamyl-tRNA(Gln) amidotransferase subunit A (481 aa).

Active-site charge relay system residues include Lys-76 and Ser-151. Residue Ser-175 is the Acyl-ester intermediate of the active site.

Belongs to the amidase family. GatA subfamily. Heterotrimer of A, B and C subunits.

It carries out the reaction L-glutamyl-tRNA(Gln) + L-glutamine + ATP + H2O = L-glutaminyl-tRNA(Gln) + L-glutamate + ADP + phosphate + H(+). Its function is as follows. Allows the formation of correctly charged Gln-tRNA(Gln) through the transamidation of misacylated Glu-tRNA(Gln) in organisms which lack glutaminyl-tRNA synthetase. The reaction takes place in the presence of glutamine and ATP through an activated gamma-phospho-Glu-tRNA(Gln). In Neisseria gonorrhoeae (strain ATCC 700825 / FA 1090), this protein is Glutamyl-tRNA(Gln) amidotransferase subunit A.